A 543-amino-acid chain; its full sequence is Gap junction alpha-10 protein (543 aa).

At 1-16 the chain is on the cytoplasmic side; that stretch reads MGDWNLLGGILEEVHS. A helical transmembrane segment spans residues 17 to 37; it reads HSTIVGKIWLTILFIFRMLVL. Residues 38 to 76 are Extracellular-facing; sequence RVAAEDVWDDEQSAFACNTRQPGCNNICYDDAFPISLIR. Residues 77–97 traverse the membrane as a helical segment; sequence FWVLQIIFVSSPSLVYMGHAL. Topologically, residues 98-165 are cytoplasmic; sequence YRLRAFEKDR…TYVLHILTRS (68 aa). Residues 166-186 traverse the membrane as a helical segment; the sequence is VLEVGFMIGQYILYGFQMHPL. The Extracellular segment spans residues 187–209; the sequence is YKCTQPPCPNAVDCFVSRPTEKT. The chain crosses the membrane as a helical span at residues 210–230; sequence IFMLFMHSIAAISLLLNILEI. Topologically, residues 231 to 543 are cytoplasmic; sequence FHLGIRKIMR…HSIHSVKFNS (313 aa). 2 disordered regions span residues 306-359 and 379-424; these read PQPR…SSFG and PSFA…DRSR. Positions 317-328 are enriched in basic and acidic residues; it reads NGKKDWSEKDQH. The segment covering 344–359 has biased composition (polar residues); sequence AGNQHLGQQSDHSSFG. The span at 400 to 413 shows a compositional bias: basic and acidic residues; the sequence is TDLHSHCRDSEGSM.

Belongs to the connexin family. Alpha-type (group II) subfamily. A connexon is composed of a hexamer of connexins. In terms of tissue distribution, expressed in skeletal muscle and heart.

The protein localises to the cell membrane. It localises to the cell junction. The protein resides in the gap junction. One gap junction consists of a cluster of closely packed pairs of transmembrane channels, the connexons, through which materials of low MW diffuse from one cell to a neighboring cell. Involved in tracer coupling between horizontal cells of the retina. May play a role in the regulation of horizontal cell patterning. The polypeptide is Gap junction alpha-10 protein (GJA10) (Homo sapiens (Human)).